A 433-amino-acid polypeptide reads, in one-letter code: ATP-dependent protease ATPase subunit HslU (433 aa).

ATP-binding positions include Val18, 60 to 65 (GVGKTE), Asp246, Glu311, and Arg383.

Belongs to the ClpX chaperone family. HslU subfamily. A double ring-shaped homohexamer of HslV is capped on each side by a ring-shaped HslU homohexamer. The assembly of the HslU/HslV complex is dependent on binding of ATP.

Its subcellular location is the cytoplasm. In terms of biological role, ATPase subunit of a proteasome-like degradation complex; this subunit has chaperone activity. The binding of ATP and its subsequent hydrolysis by HslU are essential for unfolding of protein substrates subsequently hydrolyzed by HslV. HslU recognizes the N-terminal part of its protein substrates and unfolds these before they are guided to HslV for hydrolysis. This Rhodopseudomonas palustris (strain BisA53) protein is ATP-dependent protease ATPase subunit HslU.